The following is a 110-amino-acid chain: Thioredoxin (110 aa).

Residues 2-110 (SALLVEIDKD…IDAMIAKHVG (109 aa)) enclose the Thioredoxin domain. An intrachain disulfide couples C33 to C36.

The protein belongs to the thioredoxin family.

Functionally, participates in various redox reactions through the reversible oxidation of its active center dithiol to a disulfide and catalyzes dithiol-disulfide exchange reactions. The polypeptide is Thioredoxin (trxA) (Peptoclostridium acidaminophilum (Eubacterium acidaminophilum)).